The following is a 407-amino-acid chain: Putative polysaccharide ligase RF_0568 (407 aa).

10 helical membrane passes run 15–35, 71–91, 100–120, 129–149, 166–186, 203–223, 229–249, 272–292, 324–344, and 379–399; these read LGMV…LMLF, MTIK…LFAI, FIQV…VPFG, LILG…SHGF, GCAL…SSGK, ISDS…FILA, IFFK…PVIA, LFIW…GYGF, ILQI…CLVY, and IWQI…KLLV.

Belongs to the O-antigen ligase family.

The protein resides in the membrane. The chain is Putative polysaccharide ligase RF_0568 from Rickettsia felis (strain ATCC VR-1525 / URRWXCal2) (Rickettsia azadi).